The following is a 58-amino-acid chain: UPF0391 membrane protein Gbem_0127 (58 aa).

Helical transmembrane passes span 4 to 24 and 33 to 53; these read WALI…GGIA and ILFY…LLAG.

This sequence belongs to the UPF0391 family.

The protein resides in the cell membrane. The sequence is that of UPF0391 membrane protein Gbem_0127 from Citrifermentans bemidjiense (strain ATCC BAA-1014 / DSM 16622 / JCM 12645 / Bem) (Geobacter bemidjiensis).